Here is a 266-residue protein sequence, read N- to C-terminus: Early E1A protein (266 aa).

An interaction with RB1 in competition with E2F1 region spans residues 39–47 (PSLYELYDL). Residues 75-145 (EGLFLPEPPV…AAAAADRERE (71 aa)) form an interaction with UBE2I region. The PXLXP motif, interaction with host ZMYND11 signature appears at 98 to 102 (PQLHP). The LXCXE motif, interaction with host RB1 and TMEM173/STING motif lies at 107–111 (LLCYE). The segment at 159–179 (CKSCEHHRNSTGNTDLMCSLC) is a zinc-finger region. Residues 195–226 (NEPEPNSTLDGDERPSPPKLGSAVPEGVIKPV) are disordered. Residues 255–259 (PVDLS) carry the PXDLS motif, CTBP-binding motif. The Nuclear localization signal signature appears at 261–265 (KRPRC).

Belongs to the adenoviridae E1A protein family. In terms of assembly, interacts with host UBE2I; this interaction interferes with polySUMOylation. Interacts with host RB1; this interaction induces the aberrant dissociation of RB1-E2F1 complex thereby disrupting the activity of RB1 and activating E2F1-regulated genes. Interacts with host ATF7; the interaction enhances ATF7-mediated viral transactivation activity which requires the zinc binding domains of both proteins. Isoform early E1A 32 kDa protein and isoform early E1A 26 kDa protein interact (via N-terminus) with CUL1 and E3 ubiquitin ligase RBX1; these interactions inhibit RBX1-CUL1-dependent elongation reaction of ubiquitin chains and attenuate ubiquitination of SCF(FBXW7) target proteins. Interacts (via PXLXP motif) with host ZMYND11/BS69 (via MYND-type zinc finger); this interaction inhibits E1A mediated transactivation. Interacts with host EP300; this interaction stimulates the acetylation of RB1 by recruiting EP300 and RB1 into a multimeric-protein complex. Interacts with host CTBP1 and CTBP2; this interaction seems to potentiate viral replication. Interacts with host DCAF7. Interacts with host DYRK1A. Interacts with host KPNA4; this interaction allows E1A import into the host nucleus. Interacts with host EP400; this interaction stabilizes MYC. Interacts with host TBP protein; this interaction probably disrupts the TBP-TATA complex. Interacts (via LXCXE motif) with host TMEM173/STING; this interaction impairs the ability of TMEM173/STING to sense cytosolic DNA and promote the production of type I interferon (IFN-alpha and IFN-beta). Interacts (via C-terminus) with host ZBED1/hDREF (via C-terminus); the interaction is direct.

Its subcellular location is the host nucleus. Its function is as follows. Plays a role in viral genome replication by driving entry of quiescent cells into the cell cycle. Stimulation of progression from G1 to S phase allows the virus to efficiently use the cellular DNA replicating machinery to achieve viral genome replication. E1A protein has both transforming and trans-activating activities. Induces the disassembly of the E2F1 transcription factor from RB1 by direct competition for the same binding site on RB1, with subsequent transcriptional activation of E2F1-regulated S-phase genes and of the E2 region of the adenoviral genome. Release of E2F1 leads to the ARF-mediated inhibition of MDM2 and causes TP53/p53 to accumulate because it is not targeted for degradation by MDM2-mediated ubiquitination anymore. This increase in TP53, in turn, would arrest the cell proliferation and direct its death but this effect is counteracted by the viral protein E1B-55K. Inactivation of the ability of RB1 to arrest the cell cycle is critical for cellular transformation, uncontrolled cellular growth and proliferation induced by viral infection. Interaction with RBX1 and CUL1 inhibits ubiquitination of the proteins targeted by SCF(FBXW7) ubiquitin ligase complex, and may be linked to unregulated host cell proliferation. The tumorigenesis-restraining activity of E1A may be related to the disruption of the host CtBP-CtIP complex through the CtBP binding motif. Interaction with host TMEM173/STING impairs the ability of TMEM173/STING to sense cytosolic DNA and promote the production of type I interferon (IFN-alpha and IFN-beta). Promotes the sumoylation of host ZBED1/hDREF with SUMO1. This Homo sapiens (Human) protein is Early E1A protein.